The primary structure comprises 239 residues: Purine nucleoside phosphorylase DeoD-type (239 aa).

H5 provides a ligand contact to a purine D-ribonucleoside. Residues G21, R25, R44, and 88-91 (RIGS) each bind phosphate. A purine D-ribonucleoside is bound by residues 180-182 (EME) and 204-205 (TD). Catalysis depends on D205, which acts as the Proton donor.

Belongs to the PNP/UDP phosphorylase family. In terms of assembly, homohexamer; trimer of homodimers.

It carries out the reaction a purine D-ribonucleoside + phosphate = a purine nucleobase + alpha-D-ribose 1-phosphate. The catalysed reaction is a purine 2'-deoxy-D-ribonucleoside + phosphate = a purine nucleobase + 2-deoxy-alpha-D-ribose 1-phosphate. Catalyzes the reversible phosphorolytic breakdown of the N-glycosidic bond in the beta-(deoxy)ribonucleoside molecules, with the formation of the corresponding free purine bases and pentose-1-phosphate. This chain is Purine nucleoside phosphorylase DeoD-type, found in Aliivibrio fischeri (strain ATCC 700601 / ES114) (Vibrio fischeri).